The chain runs to 297 residues: 2,3,4,5-tetrahydropyridine-2,6-dicarboxylate N-succinyltransferase (297 aa).

Mg(2+) contacts are provided by D148 and E165. The active-site Acyl-anhydride intermediate is the E181. Succinyl-CoA contacts are provided by residues R183, G198, S201, A224, E239 to A240, G247, K258, and R271 to S274.

Belongs to the type 2 tetrahydrodipicolinate N-succinyltransferase family. As to quaternary structure, homotrimer.

The protein resides in the cytoplasm. It carries out the reaction (S)-2,3,4,5-tetrahydrodipicolinate + succinyl-CoA + H2O = (S)-2-succinylamino-6-oxoheptanedioate + CoA. It functions in the pathway amino-acid biosynthesis; L-lysine biosynthesis via DAP pathway; LL-2,6-diaminopimelate from (S)-tetrahydrodipicolinate (succinylase route): step 1/3. In terms of biological role, catalyzes the conversion of the cyclic tetrahydrodipicolinate (THDP) into the acyclic N-succinyl-L-2-amino-6-oxopimelate using succinyl-CoA. This Corynebacterium glutamicum (strain ATCC 13032 / DSM 20300 / JCM 1318 / BCRC 11384 / CCUG 27702 / LMG 3730 / NBRC 12168 / NCIMB 10025 / NRRL B-2784 / 534) protein is 2,3,4,5-tetrahydropyridine-2,6-dicarboxylate N-succinyltransferase.